We begin with the raw amino-acid sequence, 436 residues long: Trigger factor (436 aa).

A PPIase FKBP-type domain is found at 161–255; that stretch reads DDVAIIDFKT…VKEVREKQLP (95 aa).

It belongs to the FKBP-type PPIase family. Tig subfamily.

Its subcellular location is the cytoplasm. The catalysed reaction is [protein]-peptidylproline (omega=180) = [protein]-peptidylproline (omega=0). In terms of biological role, involved in protein export. Acts as a chaperone by maintaining the newly synthesized protein in an open conformation. Functions as a peptidyl-prolyl cis-trans isomerase. This Akkermansia muciniphila (strain ATCC BAA-835 / DSM 22959 / JCM 33894 / BCRC 81048 / CCUG 64013 / CIP 107961 / Muc) protein is Trigger factor.